Reading from the N-terminus, the 292-residue chain is Arabinose operon regulatory protein (292 aa).

The alpha-L-arabinopyanose site is built by Pro-8, Thr-24, Arg-38, Tyr-82, and His-93. Residues 180 to 279 (REACQYISDH…GASPSEFRAG (100 aa)) form the HTH araC/xylS-type domain. 2 DNA-binding regions (H-T-H motif) span residues 198 to 219 (ASVAQHVCLSPSRLSHLFRQQL) and 246 to 269 (IATVGRNVGFDDQLYFSRVFKKCT).

Homodimer.

It localises to the cytoplasm. Its activity is regulated as follows. Arabinose converts the repressor form of AraC to the activator form to regulate the araBAD promoter. In the absence of arabinose, AraC binds to the araO2 and araI1 half-sites in the promoter region of the araBAD operon, leading to the formation of a DNA loop that blocks access of RNA polymerase to the promoter. In the presence of arabinose and the cyclic AMP receptor protein (CRP), it binds to the adjacent half-sites araI1 and araI2, leading to the binding of RNA polymerase to the promoter region and transcription of the araBAD operon. AraI1 acts as a switch mechanism allowing both the repressor and the activator forms of AraC protein to regulate the araBAD promoter. Inhibited by D-fucose, which binds competitively to the same site on the protein. Transcription factor that regulates the expression of several genes involved in the transport and metabolism of L-arabinose. Functions both as a positive and a negative regulator. In the presence of arabinose, activates the expression of the araBAD, araE, araFGH and araJ promoters. In the absence of arabinose, negatively regulates the araBAD operon. Represses its own transcription. Acts by binding directly to DNA. The protein is Arabinose operon regulatory protein of Escherichia coli (strain K12).